Reading from the N-terminus, the 402-residue chain is Transcription regulatory protein OpdE (402 aa).

Transmembrane regions (helical) follow at residues 22 to 42, 60 to 80, 86 to 106, 108 to 128, 147 to 167, 170 to 190, 220 to 240, 256 to 276, 296 to 316, 318 to 338, 348 to 368, and 375 to 395; these read VLAIAVCAFALVASEFLPVSL, GIAISGAFAVLTSLFISSVAG, TLLLGLTAAMGMSGAIVALAP, YFVYMLGRALIGIVIGGFWSM, ALVNGGNALATVVAAPLGAWL, LIGWRGAFLCLVPVALVALAW, PGVMLGMLASSLFFMGQFSLF, AHVSLVLLVIGAAGFIGTLLI, ALIALVLTVLGGWPAIVVVLL, LWGLTGTSAPVGWWAWIARVF, LFVAVVQLSIALGSTLGGLLF, and ATFFASAAMLLIAAFLTILTA.

It to B.subtilis YwfA.

The protein resides in the cell membrane. Its function is as follows. Regulates the expression of oprD which encodes the imipenem-specific porin. The protein is Transcription regulatory protein OpdE (opdE) of Pseudomonas aeruginosa (strain ATCC 15692 / DSM 22644 / CIP 104116 / JCM 14847 / LMG 12228 / 1C / PRS 101 / PAO1).